A 62-amino-acid chain; its full sequence is ATP synthase subunit J, mitochondrial (62 aa).

A helical membrane pass occupies residues 13–32 (IVKPLWPYAVGGVITFFLFA).

F-type ATP synthases have 2 components, the catalytic core F(1) and the membrane-embedded component F(0), linked together by a central stalk and a peripheral stalk. The central stalk, also called rotor shaft, is often seen as part of F(1). The peripheral stalk is seen as part of F(0). F(0) contains the membrane channel next to the rotor. F-type ATP synthases form dimers but each monomer functions independently in ATP generation. The dimer consists of 17 different polypeptides: ATP1 (subunit alpha, 3 molecules per monomer, part of F(1)), ATP2 (subunit beta, 3 copies per monomer, part of F(1)), ATP3 (subunit gamma, part of the central stalk), ATP4 (subunit b, part of the peripheral stalk), ATP5/OSCP (subunit 5/OSCP, part of the peripheral stalk), ATP6 (subunit a, part of the peripheral stalk), ATP7 (subunit d, part of the peripheral stalk), ATP8 (subunit 8, part of the peripheral stalk), OLI1 (subunit c, part of the rotor, 10 molecules per monomer), ATP14 (subunit h, part of the peripheral stalk), ATP15 (subunit epsilon, part of the central stalk), ATP16 (subunit delta, part of the central stalk), ATP17 (subunit f, part of the peripheral stalk), ATP18 (subunit i/j, part of the peripheral stalk), ATP19 (subunit k, dimer-specific, at interface between monomers), ATP20 (subunit g, at interface between monomers), TIM11 (subunit e, at interface between monomers).

It localises to the mitochondrion inner membrane. Mitochondrial membrane ATP synthase (F(1)F(0) ATP synthase or Complex V) produces ATP from ADP in the presence of a proton gradient across the membrane which is generated by electron transport complexes of the respiratory chain. F-type ATP synthases consist of two structural domains, F(1) - containing the extramembraneous catalytic core, and F(0) - containing the membrane proton channel, linked together by a central stalk and a peripheral stalk. During catalysis, ATP synthesis in the catalytic domain of F(1) is coupled via a rotary mechanism of the central stalk subunits to proton translocation. Part of the complex F(0) domain. Minor subunit located with subunit a/ATP6 in the membrane. The polypeptide is ATP synthase subunit J, mitochondrial (Yarrowia lipolytica (strain CLIB 122 / E 150) (Yeast)).